Reading from the N-terminus, the 395-residue chain is L-rhamnonate dehydratase (395 aa).

Substrate is bound by residues His-23 and Arg-49. Asp-215, Glu-241, and Glu-269 together coordinate Mg(2+). His-319 serves as the catalytic Proton acceptor. Glu-339 is a binding site for substrate.

The protein belongs to the mandelate racemase/muconate lactonizing enzyme family. RhamD subfamily. Homooctamer; tetramer of dimers. Mg(2+) is required as a cofactor.

The catalysed reaction is L-rhamnonate = 2-dehydro-3-deoxy-L-rhamnonate + H2O. Catalyzes the dehydration of L-rhamnonate to 2-keto-3-deoxy-L-rhamnonate (KDR). This chain is L-rhamnonate dehydratase, found in Delftia acidovorans (strain DSM 14801 / SPH-1).